Here is a 464-residue protein sequence, read N- to C-terminus: MSSSVYESIIQTRASVWGSTASGKAVVDSYWIHELGTGSQLVQTQLYSDSRSKVVLWLYCKVGIFPVKKKRFLSQHVYIPIFDDIDFSINIDNSVLALSVCSNTVNANGVKHQGHLKVLSPAQLHSIESIMNRSDITDRFQLQEKDIIPNDKYIEAANKGSLSCVKEHTYKIEMCYNQALGKVNVLSPNRNVHEWLYSFKPNFNQVESNNRTVNSLAVKSLLMSAENNIMPNSQASTDSHFKLSLWLRVPKVLKQVSIQKLFKVAGDETNKTFYLSIACIPNHNSVETALNITVICKHQLPIRKCKAPFELSMMFSDLKEPYNIVHDPSYPKGSVPMLWLETHTSLHKFFATNLQEDVIIYTLNNLELTPGKLDLGERTLNYSEDAYKRKYFLSKTLECLPSNTQTMSYLDSIQIPSWKIDFARGEIKISPQSISVAKSLLKLDLSGIKKKESKVKEAYASGSK.

It belongs to the tospovirus NS-S protein family. In terms of assembly, interacts with host MYC2.

Functionally, multifunctional protein that plays two independent roles: viral suppressor of host RNAi (VSR) and viral inducer of host attractiveness to insect vectors (VIA). Acts as a suppressor of RNA-mediated gene silencing, also known as post-transcriptional gene silencing (PTGS), a mechanism of plant viral defense that limits the accumulation of viral RNAs. Also inhibits signal transduction by the phytohormone jasmonate, making the infected plant more attractive to aphids, which are the second host to play a role as a dissemination vector. Acts by binding to and inhibiting MYC2 transcription factor. The protein is Non-structural protein NS-S (NSS) of Frankliniella occidentalis (Western flower thrips).